A 211-amino-acid polypeptide reads, in one-letter code: tRNA (guanine-N(7)-)-methyltransferase (211 aa).

The S-adenosyl-L-methionine site is built by glutamate 44, aspartate 69, aspartate 96, and aspartate 118. The active site involves aspartate 118. Lysine 122 serves as a coordination point for substrate. An interaction with RNA region spans residues 124–129 (KHEKRR). Substrate-binding positions include aspartate 154 and 191-194 (TEYE).

It belongs to the class I-like SAM-binding methyltransferase superfamily. TrmB family.

The catalysed reaction is guanosine(46) in tRNA + S-adenosyl-L-methionine = N(7)-methylguanosine(46) in tRNA + S-adenosyl-L-homocysteine. Its pathway is tRNA modification; N(7)-methylguanine-tRNA biosynthesis. Functionally, catalyzes the formation of N(7)-methylguanine at position 46 (m7G46) in tRNA. The chain is tRNA (guanine-N(7)-)-methyltransferase from Streptococcus agalactiae serotype Ia (strain ATCC 27591 / A909 / CDC SS700).